We begin with the raw amino-acid sequence, 129 residues long: Large ribosomal subunit protein bL20 (129 aa).

This sequence belongs to the bacterial ribosomal protein bL20 family.

Functionally, binds directly to 23S ribosomal RNA and is necessary for the in vitro assembly process of the 50S ribosomal subunit. It is not involved in the protein synthesizing functions of that subunit. The sequence is that of Large ribosomal subunit protein bL20 from Mycobacterium leprae (strain Br4923).